The sequence spans 386 residues: NADH kinase pos5, mitochondrial (386 aa).

A mitochondrion-targeting transit peptide spans 1 to 42; that stretch reads MIRAANGFRISVRNTAVCLAPNFRQLKGFSIINLGSLQYFRY.

It belongs to the NAD kinase family.

It is found in the mitochondrion. It catalyses the reaction NADH + ATP = ADP + NADPH + H(+). Its function is as follows. Phosphorylates both NADH and NAD(+), with a preference for NADH. Anti-oxidant factor and key source of the cellular reductant NADPH. The polypeptide is NADH kinase pos5, mitochondrial (pos5) (Schizosaccharomyces pombe (strain 972 / ATCC 24843) (Fission yeast)).